Here is a 368-residue protein sequence, read N- to C-terminus: Nucleotide pyrophosphatase/phosphodiesterase (368 aa).

This sequence belongs to the metallophosphoesterase superfamily. Monomer and homomer. In terms of processing, glycosylated.

The protein resides in the plastid. The protein localises to the chloroplast. Its function is as follows. Hydrolyzes pyrophosphate, phosphodiester and phosphosulfate linkages of nucleotide-sugars, sulfonucleotides and nucleoside di and triphosphates. Highest activity observed with the substrates ADP-glucose and adenosine 5'-phosphosulfate. The polypeptide is Nucleotide pyrophosphatase/phosphodiesterase (Hordeum vulgare (Barley)).